The following is a 160-amino-acid chain: 6,7-dimethyl-8-ribityllumazine synthase (160 aa).

5-amino-6-(D-ribitylamino)uracil is bound by residues Trp31, 65–67, and 89–91; these read SFE and CVV. A (2S)-2-hydroxy-3-oxobutyl phosphate-binding site is contributed by 94 to 95; the sequence is DT. His97 (proton donor) is an active-site residue. 5-amino-6-(D-ribitylamino)uracil is bound at residue Phe122. (2S)-2-hydroxy-3-oxobutyl phosphate is bound at residue Arg136.

The protein belongs to the DMRL synthase family.

The catalysed reaction is (2S)-2-hydroxy-3-oxobutyl phosphate + 5-amino-6-(D-ribitylamino)uracil = 6,7-dimethyl-8-(1-D-ribityl)lumazine + phosphate + 2 H2O + H(+). It participates in cofactor biosynthesis; riboflavin biosynthesis; riboflavin from 2-hydroxy-3-oxobutyl phosphate and 5-amino-6-(D-ribitylamino)uracil: step 1/2. Its function is as follows. Catalyzes the formation of 6,7-dimethyl-8-ribityllumazine by condensation of 5-amino-6-(D-ribitylamino)uracil with 3,4-dihydroxy-2-butanone 4-phosphate. This is the penultimate step in the biosynthesis of riboflavin. The protein is 6,7-dimethyl-8-ribityllumazine synthase of Parabacteroides distasonis (strain ATCC 8503 / DSM 20701 / CIP 104284 / JCM 5825 / NCTC 11152).